Reading from the N-terminus, the 312-residue chain is DNA-directed RNA polymerase subunit alpha (312 aa).

The segment at 1–229 (MLQYQIDRIE…ELFQPLATVT (229 aa)) is alpha N-terminal domain (alpha-NTD). Residues 239–312 (EPTAEAQIPL…IQIPQSRTSA (74 aa)) are alpha C-terminal domain (alpha-CTD).

This sequence belongs to the RNA polymerase alpha chain family. As to quaternary structure, in cyanobacteria the RNAP catalytic core is composed of 2 alpha, 1 beta, 1 beta', 1 gamma and 1 omega subunit. When a sigma factor is associated with the core the holoenzyme is formed, which can initiate transcription.

The enzyme catalyses RNA(n) + a ribonucleoside 5'-triphosphate = RNA(n+1) + diphosphate. Functionally, DNA-dependent RNA polymerase catalyzes the transcription of DNA into RNA using the four ribonucleoside triphosphates as substrates. The polypeptide is DNA-directed RNA polymerase subunit alpha (Synechococcus sp. (strain WH7803)).